We begin with the raw amino-acid sequence, 120 residues long: MSDTITSASATARYVRVTPMKARRVIDLVRGKSVAEALAILKYAPQGAAEPVAKVVASAAANAENNFGLDPRTLVISEAYANEGPTMRRFQPRAQGRAFMIRKRTSHITVVVESQKEGAK.

Belongs to the universal ribosomal protein uL22 family. In terms of assembly, part of the 50S ribosomal subunit.

In terms of biological role, this protein binds specifically to 23S rRNA; its binding is stimulated by other ribosomal proteins, e.g. L4, L17, and L20. It is important during the early stages of 50S assembly. It makes multiple contacts with different domains of the 23S rRNA in the assembled 50S subunit and ribosome. Its function is as follows. The globular domain of the protein is located near the polypeptide exit tunnel on the outside of the subunit, while an extended beta-hairpin is found that lines the wall of the exit tunnel in the center of the 70S ribosome. The chain is Large ribosomal subunit protein uL22 from Corynebacterium aurimucosum (strain ATCC 700975 / DSM 44827 / CIP 107346 / CN-1) (Corynebacterium nigricans).